The chain runs to 707 residues: MGGKQDQDKEAYGKPAKYDPSFRGPIRNRSCTDIICCVLFFLFILGYIAVGILAWVYGDPKQVLYPRNSTGAYCGIGENKEKPYLLYFNIFSCVLNTNIIAIAQNGLKCPTPQVCVSSCPEASWTVEPRQFSQTVEQVFYAANRNFCLPGVPGNMQVLQSLQQELCPSFLLPSTPALGRCFPWTNSTVPELPGISNTSISQSISGLLDSLNARDISVKIFEDFAQSWYWILIALGLALVLSLLFILLLRLVAGPLVFVLIIGVLGVLAYGIYHCWEEYRVLRDKGASISQLGFTTNLSAYRNVQETWLAALIILAVLEGVLLLMLIFLRQRICIAIALLKEASRAVGYIMSTMFYPLVTFALLLVCIAYWAIIALFLATSGQPQYVFWAPNSSLPGCEKVPMNTSCDPMEQVNSSCPGLMCVFQGYQSTGLAQRSLFNLQIYAVLGLFWTINWVLALGQCVLAGAFASFYWAFHKPRDIPTFPLGSAFLRTLRYHTGSLAFGALILTLVQIARVILEYIDHKLRGAQNPLTRCILCCFKCCLWCLEKFIKFLNRNAYIMIAIYGKNFCVSAKNAFMLLMRNIVRVVVLDKVTDLLLFFGKLLVVGGVGVLSFFFFTGRIPSLGKTFENPQLNYYWLPIMVSILGAYLIASGFFSVFGMCVDTLFLCFLEDLERNDGSADRPYYMSKSLLKILGKKNKGTPGDKKRKK.

Topologically, residues 1 to 33 are cytoplasmic; the sequence is MGGKQDQDKEAYGKPAKYDPSFRGPIRNRSCTD. A helical transmembrane segment spans residues 34–54; that stretch reads IICCVLFFLFILGYIAVGILA. The Extracellular segment spans residues 55 to 227; the sequence is WVYGDPKQVL…KIFEDFAQSW (173 aa). N-linked (GlcNAc...) asparagine glycans are attached at residues Asn68, Asn185, and Asn196. The chain crosses the membrane as a helical span at residues 228-248; sequence YWILIALGLALVLSLLFILLL. Over 249–250 the chain is Cytoplasmic; that stretch reads RL. A helical membrane pass occupies residues 251-271; the sequence is VAGPLVFVLIIGVLGVLAYGI. Residues 272–307 are Extracellular-facing; sequence YHCWEEYRVLRDKGASISQLGFTTNLSAYRNVQETW. Asn296 carries N-linked (GlcNAc...) asparagine glycosylation. The chain crosses the membrane as a helical span at residues 308-328; it reads LAALIILAVLEGVLLLMLIFL. The Cytoplasmic portion of the chain corresponds to 329 to 356; the sequence is RQRICIAIALLKEASRAVGYIMSTMFYP. The chain crosses the membrane as a helical span at residues 357-377; it reads LVTFALLLVCIAYWAIIALFL. Residues 378–452 lie on the Extracellular side of the membrane; that stretch reads ATSGQPQYVF…AVLGLFWTIN (75 aa). 3 N-linked (GlcNAc...) asparagine glycosylation sites follow: Asn391, Asn403, and Asn413. Residues 453–473 traverse the membrane as a helical segment; that stretch reads WVLALGQCVLAGAFASFYWAF. The Cytoplasmic segment spans residues 474-498; it reads HKPRDIPTFPLGSAFLRTLRYHTGS. Residues 499 to 519 form a helical membrane-spanning segment; sequence LAFGALILTLVQIARVILEYI. Topologically, residues 520–557 are extracellular; the sequence is DHKLRGAQNPLTRCILCCFKCCLWCLEKFIKFLNRNAY. A helical transmembrane segment spans residues 558 to 578; the sequence is IMIAIYGKNFCVSAKNAFMLL. At 579-594 the chain is on the cytoplasmic side; sequence MRNIVRVVVLDKVTDL. Residues 595-615 form a helical membrane-spanning segment; the sequence is LLFFGKLLVVGGVGVLSFFFF. The Extracellular portion of the chain corresponds to 616–635; sequence TGRIPSLGKTFENPQLNYYW. The helical transmembrane segment at 636–656 threads the bilayer; that stretch reads LPIMVSILGAYLIASGFFSVF. Over 657–707 the chain is Cytoplasmic; sequence GMCVDTLFLCFLEDLERNDGSADRPYYMSKSLLKILGKKNKGTPGDKKRKK.

The protein belongs to the CTL (choline transporter-like) family. Post-translationally, N-glycosylated; N-glycosylation of Asn-68 and Asn-391 is required for a proper thiamine pyrophosphate uptake.

It is found in the membrane. It localises to the apical cell membrane. It catalyses the reaction choline(out) + n H(+)(in) = choline(in) + n H(+)(out). The catalysed reaction is thiamine diphosphate(out) = thiamine diphosphate(in). Its function is as follows. Choline transporter that plays a role in the choline-acetylcholine system and is required to the efferent innervation of hair cells in the olivocochlear bundle for the maintenance of physiological function of outer hair cells and the protection of hair cells from acoustic injury. Also described as a thiamine pyrophosphate transporter in colon, may mediate the absorption of microbiota-generated thiamine pyrophosphate and contribute to host thiamine (vitamin B1) homeostasis. In Bos taurus (Bovine), this protein is Choline transporter-like protein 4.